Here is a 492-residue protein sequence, read N- to C-terminus: 2,3-bisphosphoglycerate-independent phosphoglycerate mutase (492 aa).

Positions 11 and 61 each coordinate Mn(2+). The active-site Phosphoserine intermediate is the Ser61. Substrate-binding positions include His118, 147–148 (RD), Arg178, Arg184, 248–251 (RNDR), and Lys320. Mn(2+) is bound by residues Asp386, His390, Asp427, His428, and His445.

It belongs to the BPG-independent phosphoglycerate mutase family. As to quaternary structure, monomer. Mn(2+) is required as a cofactor.

It carries out the reaction (2R)-2-phosphoglycerate = (2R)-3-phosphoglycerate. The protein operates within carbohydrate degradation; glycolysis; pyruvate from D-glyceraldehyde 3-phosphate: step 3/5. Catalyzes the interconversion of 2-phosphoglycerate and 3-phosphoglycerate. This is 2,3-bisphosphoglycerate-independent phosphoglycerate mutase from Campylobacter jejuni (strain RM1221).